The primary structure comprises 142 residues: MLEIDNQTPLESDFLLLEKIANVLAPTQIIELILVSGETMREINRDLRGCDYATDVLSFPLEAIPHTPLGSVVINAPLAQTNALKLGHRLEEEIALLFIHGVLHLLGYDHEKDKGEQRQKESELIKIFNLPLSLIERTQDSF.

Residues His100, His104, and His110 each coordinate Zn(2+).

It belongs to the endoribonuclease YbeY family. It depends on Zn(2+) as a cofactor.

It localises to the cytoplasm. In terms of biological role, single strand-specific metallo-endoribonuclease involved in late-stage 70S ribosome quality control and in maturation of the 3' terminus of the 16S rRNA. This is Endoribonuclease YbeY from Helicobacter pylori (strain G27).